A 426-amino-acid chain; its full sequence is 26S proteasome regulatory subunit 7B (426 aa).

209–216 (GPPGTGKT) is an ATP binding site.

The protein belongs to the AAA ATPase family.

Its subcellular location is the cytoplasm. It is found in the nucleus. In terms of biological role, the 26S proteasome is involved in the ATP-dependent degradation of ubiquitinated proteins. The regulatory (or ATPase) complex confers ATP dependency and substrate specificity to the 26S complex. In Oryza sativa subsp. japonica (Rice), this protein is 26S proteasome regulatory subunit 7B (RPT1B).